The following is a 359-amino-acid chain: Probable C-C chemokine receptor type 3 (359 aa).

Residues 1–38 (MAFNTDEIKTVVESFETTPYEYEWAPPCEKVRIKELGS) lie on the Extracellular side of the membrane. Residues 39–64 (WLLPPLYSLVFIIGLLGNMMVVLILI) form a helical membrane-spanning segment. At 65-68 (KYRK) the chain is on the cytoplasmic side. The helical transmembrane segment at 69 to 95 (LQIMTNIYLFNLAISDLLFLFTVPFWI) threads the bilayer. Topologically, residues 96–111 (HYVLWNEWGFGHYMCK) are extracellular. An intrachain disulfide couples C110 to C187. A helical membrane pass occupies residues 112-133 (MLSGFYYLALYSEIFFIILLTI). The Cytoplasmic portion of the chain corresponds to 134–150 (DRYLAIVHAVFALRART). A helical membrane pass occupies residues 151–175 (VTFATITSIITWGLAGLAALPEFIF). The Extracellular segment spans residues 176–201 (HESQDSFGEFSCSPRYPEGEEDSWKR). Residues 202-227 (FHALRMNIFGLALPLLIMVICYSGII) form a helical membrane-spanning segment. The Cytoplasmic segment spans residues 228–243 (KTLLRCPNKKKHKAIR). Residues 244–268 (LIFVVMIVFFIFWTPYNLVLLFSAF) traverse the membrane as a helical segment. Residues 269 to 285 (HSTFLETSCQQSKHLDL) lie on the Extracellular side of the membrane. The helical transmembrane segment at 286 to 309 (AMQVTEVIAYTHCCINPVIYAFVG) threads the bilayer. Residues 310–359 (ERFRKHLRLFFHRNVAVYLGKYIPFLPGEKMERTSSVSPSTGEQEISVVF) are Cytoplasmic-facing.

Belongs to the G-protein coupled receptor 1 family. As to expression, detected in skeletal muscle and in trace amounts in leukocytes.

The protein localises to the cell membrane. Receptor for C-C type chemokine. Binds and responds to a variety of chemokines, including CCL11, CCL26, CCL7, CCL13, RANTES(CCL5) and CCL15. Subsequently transduces a signal by increasing the intracellular calcium ions level. In addition acts as a possible functional receptor for NARS1. The polypeptide is Probable C-C chemokine receptor type 3 (Ccr3) (Mus musculus (Mouse)).